A 132-amino-acid polypeptide reads, in one-letter code: Protein MrkF (132 aa).

It is found in the fimbrium. In terms of biological role, appears to affect the stability of the intact fimbriae on the cell surface. In Klebsiella pneumoniae, this protein is Protein MrkF (mrkF).